Here is a 570-residue protein sequence, read N- to C-terminus: Sorting nexin-41 (570 aa).

Disordered regions lie at residues 1 to 31 and 81 to 115; these read MSDF…PSAS and FDDG…TTAS. The span at 84–101 shows a compositional bias: polar residues; sequence GSNSFSATPTASITNQND. The PX domain maps to 98 to 236; that stretch reads NQNDTAHEAT…RFLDPHASWS (139 aa). A 1,2-diacyl-sn-glycero-3-phospho-(1D-myo-inositol-3-phosphate) contacts are provided by arginine 153, serine 155, lysine 179, and arginine 202. The interval 429 to 498 is disordered; it reads DSQRINDALG…ASRRQGIGKT (70 aa). The segment covering 440–454 has biased composition (polar residues); it reads TRSNNGPSTTNSGEQ. Over residues 455–464 the composition is skewed to low complexity; the sequence is PSASPAPKKS.

This sequence belongs to the sorting nexin family.

It localises to the endosome membrane. It is found in the endomembrane system. In terms of biological role, may be required for cytoplasm to vacuole transport (Cvt) and pexophagy. This chain is Sorting nexin-41 (SNX41), found in Yarrowia lipolytica (strain CLIB 122 / E 150) (Yeast).